A 303-amino-acid chain; its full sequence is Pyridoxal 5'-phosphate synthase subunit PdxS (303 aa).

Residue Asp-33 participates in D-ribose 5-phosphate binding. Residue Lys-90 is the Schiff-base intermediate with D-ribose 5-phosphate of the active site. Residue Gly-162 participates in D-ribose 5-phosphate binding. Arg-174 contributes to the D-glyceraldehyde 3-phosphate binding site. D-ribose 5-phosphate is bound by residues Gly-223 and 244–245 (GS).

The protein belongs to the PdxS/SNZ family. In terms of assembly, in the presence of PdxT, forms a dodecamer of heterodimers.

It catalyses the reaction aldehydo-D-ribose 5-phosphate + D-glyceraldehyde 3-phosphate + L-glutamine = pyridoxal 5'-phosphate + L-glutamate + phosphate + 3 H2O + H(+). Its pathway is cofactor biosynthesis; pyridoxal 5'-phosphate biosynthesis. In terms of biological role, catalyzes the formation of pyridoxal 5'-phosphate from ribose 5-phosphate (RBP), glyceraldehyde 3-phosphate (G3P) and ammonia. The ammonia is provided by the PdxT subunit. Can also use ribulose 5-phosphate and dihydroxyacetone phosphate as substrates, resulting from enzyme-catalyzed isomerization of RBP and G3P, respectively. This chain is Pyridoxal 5'-phosphate synthase subunit PdxS, found in Mycobacterium avium (strain 104).